A 490-amino-acid chain; its full sequence is Aspartyl/glutamyl-tRNA(Asn/Gln) amidotransferase subunit B (490 aa).

This sequence belongs to the GatB/GatE family. GatB subfamily. In terms of assembly, heterotrimer of A, B and C subunits.

The enzyme catalyses L-glutamyl-tRNA(Gln) + L-glutamine + ATP + H2O = L-glutaminyl-tRNA(Gln) + L-glutamate + ADP + phosphate + H(+). It carries out the reaction L-aspartyl-tRNA(Asn) + L-glutamine + ATP + H2O = L-asparaginyl-tRNA(Asn) + L-glutamate + ADP + phosphate + 2 H(+). Functionally, allows the formation of correctly charged Asn-tRNA(Asn) or Gln-tRNA(Gln) through the transamidation of misacylated Asp-tRNA(Asn) or Glu-tRNA(Gln) in organisms which lack either or both of asparaginyl-tRNA or glutaminyl-tRNA synthetases. The reaction takes place in the presence of glutamine and ATP through an activated phospho-Asp-tRNA(Asn) or phospho-Glu-tRNA(Gln). This is Aspartyl/glutamyl-tRNA(Asn/Gln) amidotransferase subunit B from Burkholderia ambifaria (strain MC40-6).